Reading from the N-terminus, the 1938-residue chain is Myosin-6 (1938 aa).

One can recognise a Myosin N-terminal SH3-like domain in the interval 32–81 (DIRTECFVPDDKEEYVKAKVVSREGGKVTAETENGKTVTIKEDQVMQQNP). A Myosin motor domain is found at 85 to 780 (DKIEDMAMLT…LLGLLEEMRD (696 aa)). An N6,N6,N6-trimethyllysine modification is found at Lys129. 178 to 185 (GESGAGKT) serves as a coordination point for ATP. A Phosphothreonine modification is found at Thr379. Ser417 is subject to Phosphoserine. Actin-binding stretches follow at residues 657 to 679 (LNKLMTNLKTTHPHFVRCIIPNE) and 759 to 773 (KFGHTKVFFKAGLLG). Residues 783 to 812 (LSRIITRIQAQARGQLMRIEFKKIVERRDA) form the IQ domain. Calmodulin-binding regions lie at residues 790–807 (IQAQARGQLMRIEFKKIV) and 816–833 (IQWNIRAFMGVKNWPWMK). Residues 842-1938 (LKSAETEKEM…IGAKKMHDEE (1097 aa)) adopt a coiled-coil conformation. Ser1090 and Ser1139 each carry phosphoserine. Tyr1261 is subject to Phosphotyrosine. At Ser1271 the chain carries Phosphoserine. Phosphothreonine occurs at positions 1277 and 1284. Ser1309 carries the post-translational modification Phosphoserine. Tyr1310 is subject to Phosphotyrosine. Thr1311 bears the Phosphothreonine mark. At Ser1512 the chain carries Phosphoserine. Residue Thr1515 is modified to Phosphothreonine. A disordered region spans residues 1909–1938 (EERADIAESQVNKLRAKSRDIGAKKMHDEE). Residues 1925-1938 (KSRDIGAKKMHDEE) are compositionally biased toward basic and acidic residues.

Belongs to the TRAFAC class myosin-kinesin ATPase superfamily. Myosin family. In terms of assembly, muscle myosin is a hexameric protein that consists of 2 heavy chain subunits (MHC), 2 alkali light chain subunits (MLC) and 2 regulatory light chain subunits (MLC-2).

The protein resides in the cytoplasm. It is found in the myofibril. Functionally, muscle contraction. In Mus musculus (Mouse), this protein is Myosin-6 (Myh6).